We begin with the raw amino-acid sequence, 383 residues long: uncharacterized protein (383 aa).

The protein to V.anguillarum virulence protein VirA.

In terms of biological role, could have an enzymatic function. This is an uncharacterized protein from Sinorhizobium fredii (strain NBRC 101917 / NGR234).